The sequence spans 61 residues: Sec-independent protein translocase protein TatA (61 aa).

A helical transmembrane segment spans residues 1–21 (MFSNIGFPGLILILVAVLILF).

This sequence belongs to the TatA/E family. Forms a complex with TatC.

The protein resides in the cell membrane. Functionally, part of the twin-arginine translocation (Tat) system that transports large folded proteins containing a characteristic twin-arginine motif in their signal peptide across membranes. TatA could form the protein-conducting channel of the Tat system. In Bacillus anthracis (strain A0248), this protein is Sec-independent protein translocase protein TatA.